Reading from the N-terminus, the 76-residue chain is Large ribosomal subunit protein eL20 (76 aa).

The protein belongs to the eukaryotic ribosomal protein eL20 family. Part of the 50S ribosomal subunit. Binds 23S rRNA.

The protein is Large ribosomal subunit protein eL20 of Methanocaldococcus jannaschii (strain ATCC 43067 / DSM 2661 / JAL-1 / JCM 10045 / NBRC 100440) (Methanococcus jannaschii).